Reading from the N-terminus, the 145-residue chain is MKGLLQRVRGARVEVAGEIVGAVDQGLLVLVAVEPSDTPESADKLLHKLLNYRVFSDDEGKMNLSLKDIDGGLLLVSQFTLAADTKSGLRPSFSTAAPPALGAALFDHLLLQAQQLHGKVASGRFGADMQVHLVNDGPVTFLLQT.

Positions 137 to 138 (GP) match the Gly-cisPro motif, important for rejection of L-amino acids motif.

Belongs to the DTD family. Homodimer.

The protein resides in the cytoplasm. It carries out the reaction glycyl-tRNA(Ala) + H2O = tRNA(Ala) + glycine + H(+). The enzyme catalyses a D-aminoacyl-tRNA + H2O = a tRNA + a D-alpha-amino acid + H(+). Its function is as follows. An aminoacyl-tRNA editing enzyme that deacylates mischarged D-aminoacyl-tRNAs. Also deacylates mischarged glycyl-tRNA(Ala), protecting cells against glycine mischarging by AlaRS. Acts via tRNA-based rather than protein-based catalysis; rejects L-amino acids rather than detecting D-amino acids in the active site. By recycling D-aminoacyl-tRNA to D-amino acids and free tRNA molecules, this enzyme counteracts the toxicity associated with the formation of D-aminoacyl-tRNA entities in vivo and helps enforce protein L-homochirality. In Pseudomonas fluorescens (strain SBW25), this protein is D-aminoacyl-tRNA deacylase.